The primary structure comprises 300 residues: Probable ABC transporter permease protein YurM (300 aa).

Transmembrane regions (helical) follow at residues 37 to 57 (VWVFLFLYLIAIAYPLLWMVM), 98 to 118 (VIVTALTCVITVFISAWAAYG), 129 to 149 (FFLVLCLGGLMLTPQVSLVPL), 161 to 181 (TYWALILPYAAYRIPFTIILI), 204 to 224 (FGVFFRIFLPMSVPILVTSGI), and 264 to 284 (WGVLLAGLTISAAPIIILFLL). An ABC transmembrane type-1 domain is found at 94-285 (FMNSVIVTAL…APIIILFLLM (192 aa)).

Belongs to the binding-protein-dependent transport system permease family. MalFG subfamily.

It localises to the cell membrane. In terms of biological role, probably part of the binding-protein-dependent transport system YurMNO. Probably responsible for the translocation of the substrate across the membrane. This is Probable ABC transporter permease protein YurM (yurM) from Bacillus subtilis (strain 168).